Reading from the N-terminus, the 252-residue chain is Type III pantothenate kinase (252 aa).

ATP is bound at residue 6–13 (DIGNTNTV). Position 105-108 (105-108 (GADR)) interacts with substrate. The active-site Proton acceptor is D107. D127 contacts K(+). T130 lines the ATP pocket. Residue T182 participates in substrate binding.

This sequence belongs to the type III pantothenate kinase family. As to quaternary structure, homodimer. NH4(+) is required as a cofactor. Requires K(+) as cofactor.

The protein localises to the cytoplasm. The enzyme catalyses (R)-pantothenate + ATP = (R)-4'-phosphopantothenate + ADP + H(+). It functions in the pathway cofactor biosynthesis; coenzyme A biosynthesis; CoA from (R)-pantothenate: step 1/5. Catalyzes the phosphorylation of pantothenate (Pan), the first step in CoA biosynthesis. This chain is Type III pantothenate kinase, found in Salinispora arenicola (strain CNS-205).